The sequence spans 943 residues: Isoleucine--tRNA ligase (943 aa).

The short motif at 58-68 is the 'HIGH' region element; that stretch reads PYANGTIHIGH. Residue Glu567 coordinates L-isoleucyl-5'-AMP. The 'KMSKS' region motif lies at 608 to 612; sequence KMSKS. Lys611 contacts ATP. Zn(2+) is bound by residues Cys906, Cys909, Cys926, and Cys929.

This sequence belongs to the class-I aminoacyl-tRNA synthetase family. IleS type 1 subfamily. Monomer. Requires Zn(2+) as cofactor.

The protein localises to the cytoplasm. The catalysed reaction is tRNA(Ile) + L-isoleucine + ATP = L-isoleucyl-tRNA(Ile) + AMP + diphosphate. Its function is as follows. Catalyzes the attachment of isoleucine to tRNA(Ile). As IleRS can inadvertently accommodate and process structurally similar amino acids such as valine, to avoid such errors it has two additional distinct tRNA(Ile)-dependent editing activities. One activity is designated as 'pretransfer' editing and involves the hydrolysis of activated Val-AMP. The other activity is designated 'posttransfer' editing and involves deacylation of mischarged Val-tRNA(Ile). This Pseudomonas syringae pv. tomato (strain ATCC BAA-871 / DC3000) protein is Isoleucine--tRNA ligase.